We begin with the raw amino-acid sequence, 223 residues long: Membrane-associated progesterone receptor component 2 (223 aa).

The disordered stretch occupies residues 1 to 33 (MAAGDGDVKLGTLGSGSESSNDGGSESPGDAGA). Residue S15 is glycosylated (O-linked (Xyl...) (chondroitin sulfate) serine). Positions 15 to 33 (SGSESSNDGGSESPGDAGA) are enriched in low complexity. A helical transmembrane segment spans residues 42–66 (AAALALLTGGGEMLLNVALVALVLL). S90, S104, and S208 each carry phosphoserine. One can recognise a Cytochrome b5 heme-binding domain in the interval 102-201 (DFSLEQLRQY…EKYDYVGRLL (100 aa)). The disordered stretch occupies residues 202 to 223 (KPGEEPSEYTDEEDTKDHNKQD). Residues 206-215 (EPSEYTDEED) are compositionally biased toward acidic residues. The residue at position 210 (Y210) is a Phosphotyrosine. T211 bears the Phosphothreonine mark.

It belongs to the cytochrome b5 family. MAPR subfamily. As to quaternary structure, interacts with PGRMC1. Interacts with AAAS. Expressed by endometrial glands and stroma (at protein level). Detected in urine (at protein level).

The protein resides in the membrane. Its subcellular location is the nucleus envelope. It localises to the endoplasmic reticulum. The protein localises to the secreted. Required for the maintenance of uterine histoarchitecture and normal female reproductive lifespan. May serve as a universal non-classical progesterone receptor in the uterus. Intracellular heme chaperone required for delivery of labile, or signaling heme, to the nucleus. Plays a role in adipocyte function and systemic glucose homeostasis. In brown fat, which has a high demand for heme, delivery of labile heme in the nucleus regulates the activity of heme-responsive transcriptional repressors such as NR1D1 and BACH1. This Homo sapiens (Human) protein is Membrane-associated progesterone receptor component 2.